Reading from the N-terminus, the 321-residue chain is MADAGDNQQEAERRSDETESRSIKEPKEKEDEDENPQDQIQSKERMRQSSPYPVRPGKKDCQFYLKNGLCRYRSSCRFNHPTQRPQELPVRICKHIMDRNVAEPMYQDWRESESERRFDERTQRTFGDERTQRRYGIEYSGARPEKRSKIVPDFQMRDPRHHDTEWRFERERMERIERQRREAEENLQEQRQRDSIERQRREAEENLQEQRQRDSIERQRREAQENLQQQRQRDSIERQRREAQENLQQQRLQDMPENHNVDDQQNLQEQRRISIEKERTEARLRLEQIRPTVSFPINEFIRAVVLLRELIENWDDKAWKK.

2 disordered regions span residues 1–59 (MADA…PGKK) and 181–269 (REAE…NLQE). Basic and acidic residues predominate over residues 10-29 (EAERRSDETESRSIKEPKEK). The C3H1-type zinc-finger motif lies at 55-83 (RPGKKDCQFYLKNGLCRYRSSCRFNHPTQ). The stretch at 164–290 (TEWRFERERM…EARLRLEQIR (127 aa)) forms a coiled coil. 2 stretches are compositionally biased toward basic and acidic residues: residues 181–224 (REAE…REAQ) and 231–244 (RQRD…REAQ).

In Arabidopsis thaliana (Mouse-ear cress), this protein is Putative zinc finger CCCH domain-containing protein 9.